Consider the following 281-residue polypeptide: Nucleotide-binding protein Tpet_1006 (281 aa).

ATP is bound at residue 9–16 (GLSGAGKT). Position 58 to 61 (58 to 61 (DVRS)) interacts with GTP.

Belongs to the RapZ-like family.

Functionally, displays ATPase and GTPase activities. In Thermotoga petrophila (strain ATCC BAA-488 / DSM 13995 / JCM 10881 / RKU-1), this protein is Nucleotide-binding protein Tpet_1006.